We begin with the raw amino-acid sequence, 596 residues long: Tripeptidyl-peptidase SED2 (596 aa).

A signal peptide spans 1–16 (MLVLKFVCLLASVAAA). A propeptide spans 18-203 (PTSWSSHKVV…LEAMSEEEFS (186 aa)) (removed in mature form). Residues 210-596 (LVTTACLREL…NFQALTKVLP (387 aa)) enclose the Peptidase S53 domain. N-linked (GlcNAc...) asparagine glycosylation occurs at Asn265. Active-site charge relay system residues include Glu286 and Asp290. Asn403 carries an N-linked (GlcNAc...) asparagine glycan. The active-site Charge relay system is Ser501. Ca(2+) contacts are provided by Asp543 and Ile544. The N-linked (GlcNAc...) asparagine glycan is linked to Asn572. Ca(2+)-binding residues include Gly576 and Asp578.

Ca(2+) serves as cofactor.

The protein resides in the secreted. The protein localises to the extracellular space. It carries out the reaction Release of an N-terminal tripeptide from a polypeptide.. Its function is as follows. Secreted tripeptidyl-peptidase which degrades proteins at acidic pHs and is involved in virulence. In Arthroderma otae (strain ATCC MYA-4605 / CBS 113480) (Microsporum canis), this protein is Tripeptidyl-peptidase SED2 (SED2).